The primary structure comprises 227 residues: 6-phosphogluconolactonase (227 aa).

The protein belongs to the glucosamine/galactosamine-6-phosphate isomerase family. 6-phosphogluconolactonase subfamily.

The catalysed reaction is 6-phospho-D-glucono-1,5-lactone + H2O = 6-phospho-D-gluconate + H(+). It functions in the pathway carbohydrate degradation; pentose phosphate pathway; D-ribulose 5-phosphate from D-glucose 6-phosphate (oxidative stage): step 2/3. In terms of biological role, hydrolysis of 6-phosphogluconolactone to 6-phosphogluconate. This chain is 6-phosphogluconolactonase (pgl), found in Helicobacter pylori (strain J99 / ATCC 700824) (Campylobacter pylori J99).